The sequence spans 76 residues: Protein RALF-like 30 (76 aa).

The first 22 residues, 1 to 22 (MKAWVICLMVISIFMMIEPTLA), serve as a signal peptide directing secretion. 2 cysteine pairs are disulfide-bonded: Cys37-Cys46 and Cys66-Cys72.

This sequence belongs to the plant rapid alkalinization factor (RALF) family.

The protein localises to the secreted. In terms of biological role, cell signaling peptide that may regulate plant stress, growth, and development. Mediates a rapid alkalinization of extracellular space by mediating a transient increase in the cytoplasmic Ca(2+) concentration leading to a calcium-dependent signaling events through a cell surface receptor and a concomitant activation of some intracellular mitogen-activated protein kinases. The protein is Protein RALF-like 30 (RALFL30) of Arabidopsis thaliana (Mouse-ear cress).